We begin with the raw amino-acid sequence, 310 residues long: Porphobilinogen deaminase (310 aa).

Cys-243 carries the S-(dipyrrolylmethanemethyl)cysteine modification.

The protein belongs to the HMBS family. As to quaternary structure, monomer. Requires dipyrromethane as cofactor.

It catalyses the reaction 4 porphobilinogen + H2O = hydroxymethylbilane + 4 NH4(+). The protein operates within porphyrin-containing compound metabolism; protoporphyrin-IX biosynthesis; coproporphyrinogen-III from 5-aminolevulinate: step 2/4. Its function is as follows. Tetrapolymerization of the monopyrrole PBG into the hydroxymethylbilane pre-uroporphyrinogen in several discrete steps. This Methylobacillus flagellatus (strain ATCC 51484 / DSM 6875 / VKM B-1610 / KT) protein is Porphobilinogen deaminase.